The sequence spans 287 residues: Shikimate dehydrogenase (NADP(+)) (287 aa).

Shikimate contacts are provided by residues 20–22 and Thr67; that span reads SRS. The Proton acceptor role is filled by Lys71. Glu84 serves as a coordination point for NADP(+). 2 residues coordinate shikimate: Asn93 and Asp108. Residues 132-136, 156-161, and Met226 contribute to the NADP(+) site; these read GAGGA and NRTAAR. Tyr228 contributes to the shikimate binding site. Gly250 serves as a coordination point for NADP(+).

This sequence belongs to the shikimate dehydrogenase family. In terms of assembly, homodimer.

The enzyme catalyses shikimate + NADP(+) = 3-dehydroshikimate + NADPH + H(+). It functions in the pathway metabolic intermediate biosynthesis; chorismate biosynthesis; chorismate from D-erythrose 4-phosphate and phosphoenolpyruvate: step 4/7. Its function is as follows. Involved in the biosynthesis of the chorismate, which leads to the biosynthesis of aromatic amino acids. Catalyzes the reversible NADPH linked reduction of 3-dehydroshikimate (DHSA) to yield shikimate (SA). The sequence is that of Shikimate dehydrogenase (NADP(+)) from Bordetella parapertussis (strain 12822 / ATCC BAA-587 / NCTC 13253).